Consider the following 227-residue polypeptide: MMLHIPGVLTKAQVAQCREMLDTADWVDGNATSGAQSALAKRNRQLPEGSPVARTVGDAIQDALARHPLFFSAALPLKVFPPLFNRYEGGETFGTHVDNAIRLLRGTDFRVRSDLSATLFLEEPDAYDGGELCVEDTYGVHRAKLPAGDLVLYPASSLHHVTPVTRGERVASFFWIQSMVRDDGDRTLLFQLDTQIQALSAEKGAKDPVVISLTGIYHNLLRKWADA.

A Fe2OG dioxygenase domain is found at 78–178 (KVFPPLFNRY…RVASFFWIQS (101 aa)). Positions 96, 98, and 159 each coordinate Fe cation. Arginine 169 contacts 2-oxoglutarate.

Fe(2+) serves as cofactor. L-ascorbate is required as a cofactor.

This is PKHD-type hydroxylase Bcen_3557 from Burkholderia orbicola (strain AU 1054).